The chain runs to 274 residues: Nitrogenase iron protein (274 aa).

Residue 8–15 (GKGGIGKS) coordinates ATP. Residue Cys-94 coordinates [4Fe-4S] cluster. The residue at position 97 (Arg-97) is an ADP-ribosylarginine; by dinitrogenase reductase ADP-ribosyltransferase. Position 131 (Cys-131) interacts with [4Fe-4S] cluster.

It belongs to the NifH/BchL/ChlL family. As to quaternary structure, homodimer. It depends on [4Fe-4S] cluster as a cofactor. The reversible ADP-ribosylation of Arg-97 inactivates the nitrogenase reductase and regulates nitrogenase activity.

It catalyses the reaction N2 + 8 reduced [2Fe-2S]-[ferredoxin] + 16 ATP + 16 H2O = H2 + 8 oxidized [2Fe-2S]-[ferredoxin] + 2 NH4(+) + 16 ADP + 16 phosphate + 6 H(+). Its function is as follows. The key enzymatic reactions in nitrogen fixation are catalyzed by the nitrogenase complex, which has 2 components: the iron protein and the molybdenum-iron protein. The sequence is that of Nitrogenase iron protein from Chlorobium phaeovibrioides (strain DSM 265 / 1930) (Prosthecochloris vibrioformis (strain DSM 265)).